A 72-amino-acid polypeptide reads, in one-letter code: Heat-stable enterotoxin C (72 aa).

The signal sequence occupies residues 1-19; sequence MKKIVFVLTLMLFSFGTLG. Cystine bridges form between Cys-60/Cys-65, Cys-61/Cys-69, and Cys-64/Cys-72.

This sequence belongs to the heat-stable enterotoxin family.

Its subcellular location is the secreted. Toxin which activates the particulate form of guanylate cyclase and increases cyclic GMP levels within the host intestinal epithelial cells. Highly toxic. In Yersinia enterocolitica, this protein is Heat-stable enterotoxin C (ystC).